Consider the following 469-residue polypeptide: MSSRTLYDKVWNFHQVKELPGGSTQLFIGLHLIHEVTSPQAFSALNEKKLGVKFPNLTVATVDHIVPTSNQQRPFSDPLAEEMLATLEKNCKTHGIKFHGIGSNSQGVVHVMAPELGLTQPGMTVACGDSHTSTHGAFGAIAFGIGTSQVRDVLASQSLAMNKLKVRRIWVEGELQKGVYAKDLILHIIRHLGVKGGVGFAYEFAGPAIEKLSMEGRMTICNMAIEGGARCGYINPDETTFKYIKGKEHAPKGQEWDKAISWWKSLASDSKATFDDEIQLDGSSIEPTVTWGITPGQGISIKETIPNPEFLPKNEQQIAKDACKYMNLKPDEPIEGQSIDVCFIGSCTNGRLSDLEEASKIVKGNTVADGIRAFVVPGSQKVAKEAKEKGLDKIFLKAGFEWREPGCSMCLAMNPDKLEGRQISASSSNRNFKGRQGSANGRTLLMSPAMVAAAAINGKVTDVRKFLKE.

Residues Cys-347, Cys-407, and Cys-410 each coordinate [4Fe-4S] cluster.

It belongs to the aconitase/IPM isomerase family. LeuC type 1 subfamily. As to quaternary structure, heterodimer of LeuC and LeuD. [4Fe-4S] cluster serves as cofactor.

The enzyme catalyses (2R,3S)-3-isopropylmalate = (2S)-2-isopropylmalate. The protein operates within amino-acid biosynthesis; L-leucine biosynthesis; L-leucine from 3-methyl-2-oxobutanoate: step 2/4. Functionally, catalyzes the isomerization between 2-isopropylmalate and 3-isopropylmalate, via the formation of 2-isopropylmaleate. This is 3-isopropylmalate dehydratase large subunit from Prochlorococcus marinus (strain NATL2A).